Reading from the N-terminus, the 428-residue chain is Glutamate-1-semialdehyde 2,1-aminomutase 1 (428 aa).

Lysine 267 bears the N6-(pyridoxal phosphate)lysine mark.

It belongs to the class-III pyridoxal-phosphate-dependent aminotransferase family. HemL subfamily. In terms of assembly, homodimer. Pyridoxal 5'-phosphate serves as cofactor.

The protein localises to the cytoplasm. The catalysed reaction is (S)-4-amino-5-oxopentanoate = 5-aminolevulinate. The protein operates within porphyrin-containing compound metabolism; protoporphyrin-IX biosynthesis; 5-aminolevulinate from L-glutamyl-tRNA(Glu): step 2/2. The polypeptide is Glutamate-1-semialdehyde 2,1-aminomutase 1 (hemL1) (Staphylococcus aureus (strain NCTC 8325 / PS 47)).